A 914-amino-acid chain; its full sequence is Protein ECT2 (914 aa).

Residue A2 is modified to N-acetylalanine. 2 consecutive BRCT domains span residues L171–D260 and F266–Y354. Phosphothreonine; by PKC/PRKCI is present on T359. Phosphoserine is present on residues S367 and S370. Phosphothreonine; by CDK1 is present on T373. S376 carries the phosphoserine modification. 2 short sequence motifs (nuclear localization signal) span residues R378–R382 and P401–P405. The tract at residues A388 to K449 is disordered. A compositionally biased stretch (polar residues) spans D418–Y429. Over residues T432–K449 the composition is skewed to low complexity. Position 444 is a phosphothreonine; by CDK1 (T444). The DH domain occupies A452–D641. Residue K611 forms a Glycyl lysine isopeptide (Lys-Gly) (interchain with G-Cter in SUMO2) linkage. Residues R675–T794 form the PH domain. Phosphoserine occurs at positions 716 and 842. Position 846 is a phosphothreonine; by CDK1 (T846). Residues T857–L884 are disordered. S861 and S866 each carry phosphoserine.

As to quaternary structure, homodimer. Homooligomer. Found in the centralspindlin complex. Interacts with NR1I3. Interacts (Thr-359 phosphorylated form) with PARD6A; the interaction is observed in cancer cells. Interacts (Thr-359 phosphorylated form) with PRKCI; the interaction is observed in cancer cells. Interacts with PKP4; the interaction is observed at the midbody. Interacts with RACGAP1/CYK4; the interaction is direct, occurs in a microtubule-dependent manner, occurs at anaphase and during cytokinesis, is inhibited in metaphase by phosphorylation of ECT2 on Thr-373 and is stimulated in early anaphase by dephosphorylation of ECT2 probably on Thr-373 through CDK1 activity. Interacts with PLK1; the interaction is stimulated upon its phosphorylation on Thr-444. Interacts with RHOA; the interaction results in allosteric activation of ECT2. Interacts with KIF23, PARD3, PARD6B and PRKCQ. Interacts with NEDD9/HEF1. Post-translationally, phosphorylated by PLK1 in vitro. Hyperphosphorylated during the G2 phase of the cell cycle. Phosphorylation at Thr-373 occurs during the G2/M phase, relieves its auto-inhibition status and stimulates its GEF activity. Phosphorylation at Thr-444 in G2/M phase is required for subsequent binding with PLK1 and Rho exchange activation. Dephosphorylated at the time of cytokinesis. Phosphorylation at Thr-359 is required for its transformation activity in cancer cells. In terms of tissue distribution, expressed in lung epithelial cells (at protein level). Expressed in squamous cell carcinoma, primary non-small cell lung cancer tumors and lung adenocarcinoma.

The protein resides in the nucleus. The protein localises to the cytoplasm. It localises to the cytoskeleton. It is found in the spindle. Its subcellular location is the cleavage furrow. The protein resides in the midbody. The protein localises to the cell junction. It localises to the tight junction. It is found in the microtubule organizing center. Its subcellular location is the centrosome. Autoinhibited by the C-terminal PH domain which folds back and binds to the surface of the DH domain, blocking binding of RHOA to the catalytic center of the DH domain. The 2nd BRCT domain is also involved in inhibition, probably by helping to impede RHOA binding. Allosterically activated by binding of activated GTP-bound RHOA to the PH domain which stimulates the release of PH inhibition and promotes the binding of substrate RHOA to the catalytic center. Binding of phosphorylated RACGAP1 to the N-terminal BRCT domain-containing region also releases autoinhibition. Functionally, guanine nucleotide exchange factor (GEF) that catalyzes the exchange of GDP for GTP. Promotes guanine nucleotide exchange on the Rho family members of small GTPases, like RHOA, RHOC, RAC1 and CDC42. Required for signal transduction pathways involved in the regulation of cytokinesis. Component of the centralspindlin complex that serves as a microtubule-dependent and Rho-mediated signaling required for the myosin contractile ring formation during the cell cycle cytokinesis. Regulates the translocation of RHOA from the central spindle to the equatorial region. Plays a role in the control of mitotic spindle assembly; regulates the activation of CDC42 in metaphase for the process of spindle fibers attachment to kinetochores before chromosome congression. Involved in the regulation of epithelial cell polarity; participates in the formation of epithelial tight junctions in a polarity complex PARD3-PARD6-protein kinase PRKCQ-dependent manner. Plays a role in the regulation of neurite outgrowth. Inhibits phenobarbital (PB)-induced NR1I3 nuclear translocation. Stimulates the activity of RAC1 through its association with the oncogenic PARD6A-PRKCI complex in cancer cells, thereby acting to coordinately drive tumor cell proliferation and invasion. Also stimulates genotoxic stress-induced RHOB activity in breast cancer cells leading to their cell death. The protein is Protein ECT2 of Homo sapiens (Human).